A 159-amino-acid polypeptide reads, in one-letter code: Cytochrome c-type biogenesis protein CcmE (159 aa).

Over 1–8 (MNIRRKNR) the chain is Cytoplasmic. The helical; Signal-anchor for type II membrane protein transmembrane segment at 9–29 (LWIACAVLAGLALTIGLVLYA) threads the bilayer. Residues 30–159 (LRSNIDLFYT…PASVYKDPAS (130 aa)) are Periplasmic-facing. Heme is bound by residues H130 and Y134. Positions 132-147 (ENYTPPEVEKAMEANH) are enriched in basic and acidic residues. Positions 132-159 (ENYTPPEVEKAMEANHRRPASVYKDPAS) are disordered.

This sequence belongs to the CcmE/CycJ family.

The protein localises to the cell inner membrane. Functionally, heme chaperone required for the biogenesis of c-type cytochromes. Transiently binds heme delivered by CcmC and transfers the heme to apo-cytochromes in a process facilitated by CcmF and CcmH. This Shigella sonnei (strain Ss046) protein is Cytochrome c-type biogenesis protein CcmE.